The chain runs to 479 residues: uncharacterized protein (479 aa).

Residues 150–158 (TSGSTGKPK), Asp360, Arg375, and Lys462 each bind ATP.

Belongs to the ATP-dependent AMP-binding enzyme family.

In terms of biological role, may be involved in fatty acid metabolism. This is an uncharacterized protein from Bacillus subtilis (strain 168).